The sequence spans 331 residues: UPF0324 membrane protein SAS0317 (331 aa).

Helical transmembrane passes span 9 to 26 (FMIGLTLTFIVALFSFLA), 31 to 48 (ILDKVGALTIAILIAILY), 69 to 88 (LLRFAIILYGLKLNIFDIIG), 93 to 115 (LLAIDVGVVIFSIVMMLFVNKLL), 122 to 144 (ALLLGVGTGVCGAAAIAAVAPIF), 154 to 176 (SIGIIALIGTIFSLIYTAIYAIF), 183 to 202 (YGAWSGVSLHEIAHVVLAGG), 217 to 234 (LGRVFLLIPLTIVLILIM), 247 to 269 (ISIPYFLIGFVIMALVNTYVTIP), 273 to 295 (LNILNTVSTICLLMAMVALGLNV), and 308 to 330 (LMTIIITSICLSSLAFIVVHWLY).

It belongs to the UPF0324 family.

Its subcellular location is the cell membrane. The protein is UPF0324 membrane protein SAS0317 of Staphylococcus aureus (strain MSSA476).